A 525-amino-acid chain; its full sequence is MTENIHKHRILILDFGSQYTQLVARRVRELGVYCELWAWDVTEAQIREFNPSGIILSGGPESTTEQDSPRAPDYVFQAGVPVLGVCYGMQTMAMQLGGKVQGSTQREFGYAQVEVLTDSLLVRDIQDDIGTGGAPLLDVWMSHGDKVTAIPADFVTVASTETCHFAIMANEEKRFYGVQFHPEVTHTRQGQRMLERFVLDICRCTPLWTPAKIIEDAVARIREQVGNDRVILGLSGGVDSSVTAMLLHRAIGERLTCVFVDNGLLRLNEASQVMEMFGDHYGLNIIAVPAEDRFLSALAGIDDPETKRKTIGRVFVEVFDEQALSLSDVKWLAQGTIYPDVIESAASATGKAHVIKSHHNVGGLPKEMKMGLVEPLKELFKDEVRKIGLELGLPYDMLYRHPFPGPGLGVRVLGEVKKEYCDLLRRADAIFIEELYKADLYNKVSQAFTVFLPVRSVGVMGDGRKYDWVVSLRAVETIDFMTAHWAHLPYDFLGRVSNRIINEIDGISRVVYDISGKPPATIEWE.

A Glutamine amidotransferase type-1 domain is found at 9-207 (RILILDFGSQ…VLDICRCTPL (199 aa)). Catalysis depends on cysteine 86, which acts as the Nucleophile. Active-site residues include histidine 181 and glutamate 183. The GMPS ATP-PPase domain occupies 208 to 400 (WTPAKIIEDA…LGLPYDMLYR (193 aa)). 235–241 (SGGVDSS) contributes to the ATP binding site.

Homodimer.

The enzyme catalyses XMP + L-glutamine + ATP + H2O = GMP + L-glutamate + AMP + diphosphate + 2 H(+). It participates in purine metabolism; GMP biosynthesis; GMP from XMP (L-Gln route): step 1/1. Catalyzes the synthesis of GMP from XMP. This chain is GMP synthase [glutamine-hydrolyzing], found in Sodalis glossinidius (strain morsitans).